A 324-amino-acid polypeptide reads, in one-letter code: Methionyl-tRNA formyltransferase (324 aa).

Position 114-117 (Ser114–Pro117) interacts with (6S)-5,6,7,8-tetrahydrofolate.

Belongs to the Fmt family.

The catalysed reaction is L-methionyl-tRNA(fMet) + (6R)-10-formyltetrahydrofolate = N-formyl-L-methionyl-tRNA(fMet) + (6S)-5,6,7,8-tetrahydrofolate + H(+). Functionally, attaches a formyl group to the free amino group of methionyl-tRNA(fMet). The formyl group appears to play a dual role in the initiator identity of N-formylmethionyl-tRNA by promoting its recognition by IF2 and preventing the misappropriation of this tRNA by the elongation apparatus. The chain is Methionyl-tRNA formyltransferase from Phocaeicola vulgatus (strain ATCC 8482 / DSM 1447 / JCM 5826 / CCUG 4940 / NBRC 14291 / NCTC 11154) (Bacteroides vulgatus).